Here is a 62-residue protein sequence, read N- to C-terminus: U10-hottentoxin-Hj2a (62 aa).

The N-terminal stretch at Met1–Gly22 is a signal peptide. Intrachain disulfides connect Cys28/Cys46, Cys33/Cys59, and Cys37/Cys61.

This sequence belongs to the short scorpion toxin superfamily. Potassium channel inhibitor family. Alpha-KTx 23 subfamily. In terms of tissue distribution, expressed by the venom gland.

It is found in the secreted. Functionally, may block potassium channels. This is U10-hottentoxin-Hj2a from Hottentotta judaicus (Black scorpion).